The chain runs to 256 residues: MYRVYKNNKFILISIPRITNKLWQKNCNLVILLGVLLVLTLFHDPIIVAALGGESNPAVGLFTFGDSYFDGGNKMFNFFWPYGKSRDDPNGKFSDGRIVPDFIAEFMGIPEEIPPVFKTAVDVLRGASFGVADASILGYPATSMTLNQQVDNFRSMKSNWIDDFIGRSLFMIYIGTEDKLNFTKNKPNALLHSLKASKFAIQLLARWVAYQYRDKNTRQGNECYEPLNDLVKQHNEKIGPMLNDLAKTNPGRTSQH.

A signal peptide spans 1-49 (MYRVYKNNKFILISIPRITNKLWQKNCNLVILLGVLLVLTLFHDPIIVA). S67 acts as the Nucleophile in catalysis. N181 carries an N-linked (GlcNAc...) asparagine glycan.

The protein belongs to the 'GDSL' lipolytic enzyme family.

It localises to the secreted. This is GDSL esterase/lipase At1g18120 from Arabidopsis thaliana (Mouse-ear cress).